The following is a 255-amino-acid chain: Ribosomal RNA small subunit methyltransferase A (255 aa).

Residues N12, L14, G39, E60, D84, and N106 each coordinate S-adenosyl-L-methionine.

This sequence belongs to the class I-like SAM-binding methyltransferase superfamily. rRNA adenine N(6)-methyltransferase family. RsmA subfamily.

It localises to the cytoplasm. The catalysed reaction is adenosine(1518)/adenosine(1519) in 16S rRNA + 4 S-adenosyl-L-methionine = N(6)-dimethyladenosine(1518)/N(6)-dimethyladenosine(1519) in 16S rRNA + 4 S-adenosyl-L-homocysteine + 4 H(+). Specifically dimethylates two adjacent adenosines (A1518 and A1519) in the loop of a conserved hairpin near the 3'-end of 16S rRNA in the 30S particle. May play a critical role in biogenesis of 30S subunits. This Herminiimonas arsenicoxydans protein is Ribosomal RNA small subunit methyltransferase A.